Here is a 398-residue protein sequence, read N- to C-terminus: Protein CDKN2AIP homolog A (398 aa).

One can recognise an XRN2-binding (XTBD) domain in the interval 19–124 (LELVHGECES…KVKKRGISSS (106 aa)). The interval 118–245 (KRGISSSNEG…SDNALKPTRR (128 aa)) is disordered. Over residues 131 to 147 (EPCKKQKSSDHGERESS) the composition is skewed to basic and acidic residues. Polar residues-rich tracts occupy residues 154–163 (SDGNVPSTSL), 189–199 (RRSLPVSNAKS), and 226–238 (QTSM…SSDN).

This sequence belongs to the CARF family.

The protein resides in the nucleus. The protein localises to the nucleoplasm. Its function is as follows. May regulate DNA damage response and cell proliferation. This is Protein CDKN2AIP homolog A (cdkn2aip-a) from Xenopus laevis (African clawed frog).